The primary structure comprises 132 residues: Large ribosomal subunit protein bL19 (132 aa).

Belongs to the bacterial ribosomal protein bL19 family.

In terms of biological role, this protein is located at the 30S-50S ribosomal subunit interface and may play a role in the structure and function of the aminoacyl-tRNA binding site. The sequence is that of Large ribosomal subunit protein bL19 from Maricaulis maris (strain MCS10) (Caulobacter maris).